Here is a 750-residue protein sequence, read N- to C-terminus: Photosystem I P700 chlorophyll a apoprotein A1 (750 aa).

8 helical membrane passes run 72–95 (VFSAHFGQLAVIFIWLSGMYFHGA), 158–181 (LYTTAIGGLIAAGLMFFAGWFHYH), 197–221 (MNHHLAGLLGLGSLSWAGHQIHVSL), 293–311 (TVHHHVAIAVLFIVAGHMY), 348–371 (WHAQLGLNLALMGSLSIIVAHHMY), 387–413 (LSLFTHHMWIGGFCIVGGAAHAAIFMV), 435–457 (AIISHLNWVCIFLGFHSFGLYIH), and 532–550 (FLVHHIHAFTIHVTVLILL). [4Fe-4S] cluster contacts are provided by Cys-574 and Cys-583. The next 2 membrane-spanning stretches (helical) occupy residues 590–611 (HVFLGLFWMYNCLSIVIFHFSW) and 664–686 (LSAYGLMFLGAHFVWAFSLMFLF). His-675 is a binding site for chlorophyll a'. 2 residues coordinate chlorophyll a: Met-683 and Tyr-691. Trp-692 contributes to the phylloquinone binding site. A helical membrane pass occupies residues 724–744 (AVGVAHYLLGGIATTWAFFLA).

The protein belongs to the PsaA/PsaB family. The PsaA/B heterodimer binds the P700 chlorophyll special pair and subsequent electron acceptors. PSI consists of a core antenna complex that captures photons, and an electron transfer chain that converts photonic excitation into a charge separation. The eukaryotic PSI reaction center is composed of at least 11 subunits. The cofactor is P700 is a chlorophyll a/chlorophyll a' dimer, A0 is one or more chlorophyll a, A1 is one or both phylloquinones and FX is a shared 4Fe-4S iron-sulfur center..

Its subcellular location is the plastid. It localises to the chloroplast thylakoid membrane. The catalysed reaction is reduced [plastocyanin] + hnu + oxidized [2Fe-2S]-[ferredoxin] = oxidized [plastocyanin] + reduced [2Fe-2S]-[ferredoxin]. Functionally, psaA and PsaB bind P700, the primary electron donor of photosystem I (PSI), as well as the electron acceptors A0, A1 and FX. PSI is a plastocyanin-ferredoxin oxidoreductase, converting photonic excitation into a charge separation, which transfers an electron from the donor P700 chlorophyll pair to the spectroscopically characterized acceptors A0, A1, FX, FA and FB in turn. Oxidized P700 is reduced on the lumenal side of the thylakoid membrane by plastocyanin. This is Photosystem I P700 chlorophyll a apoprotein A1 from Mesostigma viride (Green alga).